Here is a 324-residue protein sequence, read N- to C-terminus: Lipid droplet-associated hydrolase (324 aa).

Catalysis depends on Ser-136, which acts as the Nucleophile. Catalysis depends on charge relay system residues Asp-270 and His-299.

This sequence belongs to the AB hydrolase superfamily. LDAH family.

It is found in the lipid droplet. It localises to the endoplasmic reticulum. The enzyme catalyses a cholesterol ester + H2O = cholesterol + a fatty acid + H(+). In terms of biological role, probable serine lipid hydrolase associated with lipid droplets. Has low cholesterol esterase activity. Appears to lack triglyceride lipase activity. Involved in cholesterol and triglyceride homeostasis; stimulates cellular triglyceride accumulation and cellular cholesterol release. In Gallus gallus (Chicken), this protein is Lipid droplet-associated hydrolase.